Reading from the N-terminus, the 392-residue chain is Homoserine O-acetyltransferase (392 aa).

An AB hydrolase-1 domain is found at 52-356; sequence NVVVVLHALT…ICGHDGFLVE (305 aa). Serine 157 (nucleophile) is an active-site residue. Substrate is bound at residue arginine 227. Residues aspartate 320 and histidine 350 contribute to the active site. Aspartate 351 lines the substrate pocket. The interval 373-392 is disordered; sequence SQSAGPGGAGPGSRKGTTRR.

The protein belongs to the AB hydrolase superfamily. MetX family. As to quaternary structure, homodimer.

It localises to the cytoplasm. It carries out the reaction L-homoserine + acetyl-CoA = O-acetyl-L-homoserine + CoA. It functions in the pathway amino-acid biosynthesis; L-methionine biosynthesis via de novo pathway; O-acetyl-L-homoserine from L-homoserine: step 1/1. Its function is as follows. Transfers an acetyl group from acetyl-CoA to L-homoserine, forming acetyl-L-homoserine. The protein is Homoserine O-acetyltransferase of Mycolicibacterium paratuberculosis (strain ATCC BAA-968 / K-10) (Mycobacterium paratuberculosis).